The sequence spans 624 residues: Adhesion and hyphal regulator 1 (624 aa).

The segment at residues 19 to 46 is a DNA-binding region (zn(2)-C6 fungal-type); the sequence is CVTCRDRHIKCDEQQPVCKNCQKSNRKC. 2 disordered regions span residues 63–84 and 230–250; these read DDNK…YAFP and PQHH…TDPN. Residues 237–250 show a composition bias toward polar residues; it reads DTSQHQETTSTDPN.

In terms of assembly, interacts with MCM1.

It is found in the nucleus. Transcription factor that binds the promoters of genes involved in biofilm formation, which include several key adhesion genes, and recruits MCM1 to these sites. Plays an important role in hyphal growth and virulence. Promotes conversion of opaque cells to white phase, but needs existence of EFG1, a key regulator required for maintenance of the white state. The sequence is that of Adhesion and hyphal regulator 1 (AHR1) from Candida albicans (strain SC5314 / ATCC MYA-2876) (Yeast).